A 695-amino-acid polypeptide reads, in one-letter code: Elongation factor G (695 aa).

A tr-type G domain is found at 10-289 (KNLRNIGIMA…AVVAWMPSPL (280 aa)). Residues 19–26 (AHIDAGKT), 83–87 (DTPGH), and 137–140 (NKMD) contribute to the GTP site.

It belongs to the TRAFAC class translation factor GTPase superfamily. Classic translation factor GTPase family. EF-G/EF-2 subfamily.

It localises to the cytoplasm. Catalyzes the GTP-dependent ribosomal translocation step during translation elongation. During this step, the ribosome changes from the pre-translocational (PRE) to the post-translocational (POST) state as the newly formed A-site-bound peptidyl-tRNA and P-site-bound deacylated tRNA move to the P and E sites, respectively. Catalyzes the coordinated movement of the two tRNA molecules, the mRNA and conformational changes in the ribosome. This is Elongation factor G from Protochlamydia amoebophila (strain UWE25).